A 258-amino-acid chain; its full sequence is Tryptophan synthase alpha chain (258 aa).

Residues Glu47 and Asp58 each act as proton acceptor in the active site.

The protein belongs to the TrpA family. Tetramer of two alpha and two beta chains.

It catalyses the reaction (1S,2R)-1-C-(indol-3-yl)glycerol 3-phosphate + L-serine = D-glyceraldehyde 3-phosphate + L-tryptophan + H2O. It participates in amino-acid biosynthesis; L-tryptophan biosynthesis; L-tryptophan from chorismate: step 5/5. The alpha subunit is responsible for the aldol cleavage of indoleglycerol phosphate to indole and glyceraldehyde 3-phosphate. The protein is Tryptophan synthase alpha chain of Bacillus cereus (strain ATCC 14579 / DSM 31 / CCUG 7414 / JCM 2152 / NBRC 15305 / NCIMB 9373 / NCTC 2599 / NRRL B-3711).